Here is a 449-residue protein sequence, read N- to C-terminus: C4-dicarboxylate transport protein 1 (449 aa).

8 helical membrane passes run 16-38 (FLQV…DLAV), 53-71 (MLIA…SGAG), 84-106 (VIYF…YSLG), 157-176 (ILQV…LVGE), 197-219 (GMIV…ARYG), 229-251 (LVLV…VLRL), 311-333 (GFSI…PLAM), and 358-380 (LVIL…VLVL).

It belongs to the dicarboxylate/amino acid:cation symporter (DAACS) (TC 2.A.23) family.

The protein localises to the cell inner membrane. Functionally, responsible for the transport of dicarboxylates such as succinate, fumarate, and malate from the periplasm across the membrane. The polypeptide is C4-dicarboxylate transport protein 1 (dctA1) (Pseudomonas aeruginosa (strain ATCC 15692 / DSM 22644 / CIP 104116 / JCM 14847 / LMG 12228 / 1C / PRS 101 / PAO1)).